Consider the following 209-residue polypeptide: MSKLHVVDHPLIQHKLAFIRDKETGSKTFRELVNEVSMLMAYEVTRELQTEEYEVETPISTAKTRILSGKKLGLVPILRAGLGMVESVRNLIPAARVGHIGVYRDPETLQPVEYYCKLPQDIHERELIVLDPMLATGGSAKASIQFIKDRGGTNIRFMCINAAPEGVEELQKAHPDVDIWTCAVDEKLNEKAYIVPGLGDAGDRLFGTK.

Residues Arg-79, Arg-104, and Asp-131–Ser-139 each bind 5-phospho-alpha-D-ribose 1-diphosphate. Residues Ile-194 and Gly-199–Ala-201 each bind uracil. Asp-200 contacts 5-phospho-alpha-D-ribose 1-diphosphate.

Belongs to the UPRTase family. Requires Mg(2+) as cofactor.

The enzyme catalyses UMP + diphosphate = 5-phospho-alpha-D-ribose 1-diphosphate + uracil. It participates in pyrimidine metabolism; UMP biosynthesis via salvage pathway; UMP from uracil: step 1/1. With respect to regulation, allosterically activated by GTP. In terms of biological role, catalyzes the conversion of uracil and 5-phospho-alpha-D-ribose 1-diphosphate (PRPP) to UMP and diphosphate. The protein is Uracil phosphoribosyltransferase of Natranaerobius thermophilus (strain ATCC BAA-1301 / DSM 18059 / JW/NM-WN-LF).